The following is a 295-amino-acid chain: MATPLFHGSIVALVTPMTHGEVNYEELKKLVEYHVQAGTHGIVSVGTTGESTTLSIDENVKVIKKTVEFADGRIPIIAGTGSNATSEAIILTKLLTNSGVAGCLSVVPYYNKPTQEGMYLHYKAIAESTDLPQILYNVPSRTGSDLKPETIGRLAEIPNIVGVKEATGDLTRLPLIKKLAGEDFIFLSGDDATGLESMKLGGQGVISVTNNVAAADMAKMCELALAGKFDEAEAINQRLMALHHDLFIEANPIPVKWAAYKLGLISEPNLRLPLTTLSESAQPTVLAALQKAGLI.

Position 48 (T48) interacts with pyruvate. The active-site Proton donor/acceptor is the Y136. K164 acts as the Schiff-base intermediate with substrate in catalysis. I206 is a binding site for pyruvate.

This sequence belongs to the DapA family. In terms of assembly, homotetramer; dimer of dimers.

The protein resides in the cytoplasm. The catalysed reaction is L-aspartate 4-semialdehyde + pyruvate = (2S,4S)-4-hydroxy-2,3,4,5-tetrahydrodipicolinate + H2O + H(+). Its pathway is amino-acid biosynthesis; L-lysine biosynthesis via DAP pathway; (S)-tetrahydrodipicolinate from L-aspartate: step 3/4. Functionally, catalyzes the condensation of (S)-aspartate-beta-semialdehyde [(S)-ASA] and pyruvate to 4-hydroxy-tetrahydrodipicolinate (HTPA). In Actinobacillus pleuropneumoniae serotype 5b (strain L20), this protein is 4-hydroxy-tetrahydrodipicolinate synthase.